Consider the following 100-residue polypeptide: Urease subunit gamma (100 aa).

It belongs to the urease gamma subunit family. As to quaternary structure, heterotrimer of UreA (gamma), UreB (beta) and UreC (alpha) subunits. Three heterotrimers associate to form the active enzyme.

Its subcellular location is the cytoplasm. The catalysed reaction is urea + 2 H2O + H(+) = hydrogencarbonate + 2 NH4(+). Its pathway is nitrogen metabolism; urea degradation; CO(2) and NH(3) from urea (urease route): step 1/1. In Haemophilus influenzae (strain PittEE), this protein is Urease subunit gamma.